The primary structure comprises 628 residues: 1-deoxy-D-xylulose-5-phosphate synthase (628 aa).

Residues H77 and G118 to S120 contribute to the thiamine diphosphate site. Position 150 (D150) interacts with Mg(2+). Thiamine diphosphate-binding positions include G151–A152, N180, Y288, and E369. N180 contributes to the Mg(2+) binding site.

It belongs to the transketolase family. DXPS subfamily. As to quaternary structure, homodimer. Mg(2+) serves as cofactor. The cofactor is thiamine diphosphate.

The catalysed reaction is D-glyceraldehyde 3-phosphate + pyruvate + H(+) = 1-deoxy-D-xylulose 5-phosphate + CO2. It participates in metabolic intermediate biosynthesis; 1-deoxy-D-xylulose 5-phosphate biosynthesis; 1-deoxy-D-xylulose 5-phosphate from D-glyceraldehyde 3-phosphate and pyruvate: step 1/1. In terms of biological role, catalyzes the acyloin condensation reaction between C atoms 2 and 3 of pyruvate and glyceraldehyde 3-phosphate to yield 1-deoxy-D-xylulose-5-phosphate (DXP). This chain is 1-deoxy-D-xylulose-5-phosphate synthase, found in Aquifex aeolicus (strain VF5).